The following is a 223-amino-acid chain: Deoxyribose-phosphate aldolase (223 aa).

Catalysis depends on D91, which acts as the Proton donor/acceptor. The Schiff-base intermediate with acetaldehyde role is filled by K153. The active-site Proton donor/acceptor is the K182.

It belongs to the DeoC/FbaB aldolase family. DeoC type 1 subfamily.

It localises to the cytoplasm. The enzyme catalyses 2-deoxy-D-ribose 5-phosphate = D-glyceraldehyde 3-phosphate + acetaldehyde. Its pathway is carbohydrate degradation; 2-deoxy-D-ribose 1-phosphate degradation; D-glyceraldehyde 3-phosphate and acetaldehyde from 2-deoxy-alpha-D-ribose 1-phosphate: step 2/2. Catalyzes a reversible aldol reaction between acetaldehyde and D-glyceraldehyde 3-phosphate to generate 2-deoxy-D-ribose 5-phosphate. The polypeptide is Deoxyribose-phosphate aldolase (Streptococcus pyogenes serotype M4 (strain MGAS10750)).